The chain runs to 71 residues: Exodeoxyribonuclease 7 small subunit (71 aa).

This sequence belongs to the XseB family. Heterooligomer composed of large and small subunits.

The protein localises to the cytoplasm. The enzyme catalyses Exonucleolytic cleavage in either 5'- to 3'- or 3'- to 5'-direction to yield nucleoside 5'-phosphates.. In terms of biological role, bidirectionally degrades single-stranded DNA into large acid-insoluble oligonucleotides, which are then degraded further into small acid-soluble oligonucleotides. This chain is Exodeoxyribonuclease 7 small subunit, found in Streptococcus pyogenes serotype M1.